A 364-amino-acid chain; its full sequence is Delta(7)-sterol 5(6)-desaturase (364 aa).

A run of 3 helical transmembrane segments spans residues 94–114 (FFSLWAVVTVFGLLLYLITAS), 142–162 (LAVSAIPTMSLLTVPWFMLEL), and 181–201 (KLLIEYATFIFFTDCGIYLAH). The region spanning 188–312 (TFIFFTDCGI…FTTLWDRLGG (125 aa)) is the Fatty acid hydroxylase domain. The Histidine box-1 motif lies at 201–205 (HRWLH). Residues 214–218 (HKPHH) carry the Histidine box-2 motif. A helical membrane pass occupies residues 249–269 (ILPLHKISYLILFTFVNFWSV). Residues 289-293 (HTVHH) carry the Histidine box-3 motif.

It belongs to the sterol desaturase family. Fe cation is required as a cofactor.

The protein localises to the endoplasmic reticulum membrane. It catalyses the reaction a Delta(7)-sterol + 2 Fe(II)-[cytochrome b5] + O2 + 2 H(+) = a Delta(5),Delta(7)-sterol + 2 Fe(III)-[cytochrome b5] + 2 H2O. It functions in the pathway steroid metabolism; ergosterol biosynthesis; ergosterol from zymosterol: step 3/5. Functionally, catalyzes the introduction of a C-5 double bond in the B ring of ergosterol. May contribute to the regulation of ergosterol biosynthesis. The sequence is that of Delta(7)-sterol 5(6)-desaturase (ERG3) from Candida glabrata (strain ATCC 2001 / BCRC 20586 / JCM 3761 / NBRC 0622 / NRRL Y-65 / CBS 138) (Yeast).